A 436-amino-acid chain; its full sequence is GTPase Der (436 aa).

EngA-type G domains lie at 4-167 (PVVA…PKEE) and 176-351 (VKFS…DNHS). GTP is bound by residues 10–17 (GRPNVGKS), 57–61 (DTGGI), 119–122 (NKVD), 182–189 (GRPNVGKS), 229–233 (DTAGM), and 294–297 (NKWD). Positions 352 to 436 (LRVQSSMLND…PIRVIARKRK (85 aa)) constitute a KH-like domain.

This sequence belongs to the TRAFAC class TrmE-Era-EngA-EngB-Septin-like GTPase superfamily. EngA (Der) GTPase family. In terms of assembly, associates with the 50S ribosomal subunit.

GTPase that plays an essential role in the late steps of ribosome biogenesis. In Listeria innocua serovar 6a (strain ATCC BAA-680 / CLIP 11262), this protein is GTPase Der.